Consider the following 370-residue polypeptide: Probable trehalose-phosphate phosphatase J (370 aa).

The protein belongs to the trehalose phosphatase family. Requires a divalent metal cation as cofactor.

It carries out the reaction alpha,alpha-trehalose 6-phosphate + H2O = alpha,alpha-trehalose + phosphate. It functions in the pathway glycan biosynthesis; trehalose biosynthesis. Its function is as follows. Removes the phosphate from trehalose 6-phosphate to produce free trehalose. Trehalose accumulation in plant may improve abiotic stress tolerance. The protein is Probable trehalose-phosphate phosphatase J (TPPJ) of Arabidopsis thaliana (Mouse-ear cress).